The chain runs to 176 residues: Large ribosomal subunit protein uL6 (176 aa).

Basic and acidic residues predominate over residues 151 to 170; it reads RPPEPYKGKGVRYADEQVRR. The interval 151–176 is disordered; that stretch reads RPPEPYKGKGVRYADEQVRRKEAKKK.

This sequence belongs to the universal ribosomal protein uL6 family. In terms of assembly, part of the 50S ribosomal subunit.

Functionally, this protein binds to the 23S rRNA, and is important in its secondary structure. It is located near the subunit interface in the base of the L7/L12 stalk, and near the tRNA binding site of the peptidyltransferase center. The chain is Large ribosomal subunit protein uL6 from Shewanella piezotolerans (strain WP3 / JCM 13877).